The chain runs to 240 residues: Coiled-coil domain-containing protein 152 (240 aa).

A coiled-coil region spans residues 55–223 (MQTKEVAMKQ…LEQRLSVSKD (169 aa)).

This chain is Coiled-coil domain-containing protein 152 (CCDC152), found in Bos taurus (Bovine).